The sequence spans 405 residues: Nicotinate phosphoribosyltransferase (405 aa).

Residue His-224 is modified to Phosphohistidine; by autocatalysis.

It belongs to the NAPRTase family. Post-translationally, transiently phosphorylated on a His residue during the reaction cycle. Phosphorylation strongly increases the affinity for substrates and increases the rate of nicotinate D-ribonucleotide production. Dephosphorylation regenerates the low-affinity form of the enzyme, leading to product release.

The catalysed reaction is nicotinate + 5-phospho-alpha-D-ribose 1-diphosphate + ATP + H2O = nicotinate beta-D-ribonucleotide + ADP + phosphate + diphosphate. It participates in cofactor biosynthesis; NAD(+) biosynthesis; nicotinate D-ribonucleotide from nicotinate: step 1/1. Functionally, catalyzes the synthesis of beta-nicotinate D-ribonucleotide from nicotinate and 5-phospho-D-ribose 1-phosphate at the expense of ATP. This is Nicotinate phosphoribosyltransferase from Methanococcoides burtonii (strain DSM 6242 / NBRC 107633 / OCM 468 / ACE-M).